A 161-amino-acid chain; its full sequence is Cyclic pyranopterin monophosphate synthase (161 aa).

Substrate is bound by residues 75–77 (MCH) and 115–116 (ME). Asp130 is an active-site residue.

This sequence belongs to the MoaC family. In terms of assembly, homohexamer; trimer of dimers.

It catalyses the reaction (8S)-3',8-cyclo-7,8-dihydroguanosine 5'-triphosphate = cyclic pyranopterin phosphate + diphosphate. It participates in cofactor biosynthesis; molybdopterin biosynthesis. Catalyzes the conversion of (8S)-3',8-cyclo-7,8-dihydroguanosine 5'-triphosphate to cyclic pyranopterin monophosphate (cPMP). The sequence is that of Cyclic pyranopterin monophosphate synthase from Bacillus mycoides (strain KBAB4) (Bacillus weihenstephanensis).